The primary structure comprises 84 residues: Esculentin-1Vb (84 aa).

The N-terminal stretch at 1–22 (MFTLKKPLLLIVLLGIISLSLC) is a signal peptide. The propeptide occupies 23–36 (EQERNADEDEESET). A disulfide bridge connects residues cysteine 78 and cysteine 84.

In terms of tissue distribution, expressed by the skin glands.

It is found in the secreted. Antimicrobial peptide. This Odorrana versabilis (Chinese bamboo leaf odorous frog) protein is Esculentin-1Vb.